A 662-amino-acid polypeptide reads, in one-letter code: DNA ligase (662 aa).

Residues 31 to 35 (DKDYD) and 79 to 80 (SL) each bind NAD(+). The active-site N6-AMP-lysine intermediate is Lys121. Positions 143, 177, and 313 each coordinate NAD(+). Zn(2+) is bound by residues Cys406, Cys409, Cys422, and Cys428. The BRCT domain occupies 586–662 (VLESPFMGKT…LSEEEFENMI (77 aa)).

It belongs to the NAD-dependent DNA ligase family. LigA subfamily. It depends on Mg(2+) as a cofactor. The cofactor is Mn(2+).

The catalysed reaction is NAD(+) + (deoxyribonucleotide)n-3'-hydroxyl + 5'-phospho-(deoxyribonucleotide)m = (deoxyribonucleotide)n+m + AMP + beta-nicotinamide D-nucleotide.. Its function is as follows. DNA ligase that catalyzes the formation of phosphodiester linkages between 5'-phosphoryl and 3'-hydroxyl groups in double-stranded DNA using NAD as a coenzyme and as the energy source for the reaction. It is essential for DNA replication and repair of damaged DNA. The sequence is that of DNA ligase from Clostridium perfringens (strain SM101 / Type A).